A 186-amino-acid chain; its full sequence is MKKFFFAAALVVSGLLVGCNQLTQYTISEQEINQALEKRNNFSKDIGLPGIADAHIVLTNLVSQIGREEPNKVTLTGDARLDMNSLFGSQKATMKLKLKALPVFDKEKGAIYLQEMEVVDATVTPEKMQSVLQTLLPYLNQSLRSYFNQRPAYVLREDSSKGEALAKKLAKGIEVKPGEIVIPFTN.

Positions 1 to 18 are cleaved as a signal peptide; that stretch reads MKKFFFAAALVVSGLLVG. The N-palmitoyl cysteine moiety is linked to residue Cys-19. Residue Cys-19 is the site of S-diacylglycerol cysteine attachment.

Its subcellular location is the cell membrane. This is an uncharacterized protein from Salmonella typhimurium (strain LT2 / SGSC1412 / ATCC 700720).